The chain runs to 556 residues: Methyltransferase/ribosomally synthesized type II borosin cyclic peptide precursor pgiMA1 (556 aa).

Residues 1–250 (MSSASSDSNT…SCSTLYVPPL (250 aa)) form a methyltransferase domain region. Residues arginine 74, tyrosine 78, and tyrosine 100 contribute to the active site. Residues tyrosine 100, histidine 102, valine 105, glutamine 174, glycine 212, serine 243, and threonine 244 each coordinate S-adenosyl-L-methionine. The tract at residues 251–377 (THANKFSGNM…GAVFGVMKLR (127 aa)) is clasp domain. The interval 378–386 (ASEVANEQG) is precursor leader. Residues aspartate 421, aspartate 434, aspartate 447, aspartate 460, aspartate 473, aspartate 486, aspartate 499, aspartate 512, aspartate 525, and aspartate 538 each carry the N-methylaspartate modification. The propeptide occupies 543 to 556 (AVPVPDHVAGIPCM).

It in the N-terminal section; belongs to the precorrin methyltransferase family. Homodimer. In terms of processing, pgiMA1 automethylates at Asp-421, Asp-434, Asp-447, Asp-460, Asp-473, Asp-486, Asp-499, Asp-512, Asp-525 and Asp-538 before being processed, probably by the M64 family peptidase found in the genes surrounding PgiMA1, to release methylated peptides which then undergos macrocyclization with the N-terminus of the modified core peptides. Peptide backbone alpha-N-methylations change the physicochemical properties of amide bonds to provide structural constraints and other favorable characteristics including biological membrane permeability to peptides.

It participates in secondary metabolite biosynthesis. Its function is as follows. Fusion protein of the methyltransferase pgiM1 and 12 type II borosin core peptides; part of the gene cluster that mediates the biosynthesis of a type II borosin, a highly methylated cyclic peptide with potent biological activities. Type II borosins derive from the C-terminus of the fusion protein, and it is the same protein that methylates its own C-terminus using S-adenosyl methionine (SAM). The C-terminus is subsequently cleaved off and macrocyclized by a prolyloligopeptidase to give the final product. The chain is Methyltransferase/ribosomally synthesized type II borosin cyclic peptide precursor pgiMA1 from Phlebiopsis gigantea (strain 11061_1 CR5-6) (White-rot fungus).